Consider the following 516-residue polypeptide: Endoglucanase 20 (516 aa).

The signal sequence occupies residues 1-23; the sequence is MAAGMVATMVLLTCLAAGGLVVG. N-linked (GlcNAc...) asparagine glycosylation occurs at Asn83. The Nucleophile role is filled by Asp93. Residues His416, Asp468, and Glu477 contribute to the active site.

It belongs to the glycosyl hydrolase 9 (cellulase E) family.

It is found in the secreted. The enzyme catalyses Endohydrolysis of (1-&gt;4)-beta-D-glucosidic linkages in cellulose, lichenin and cereal beta-D-glucans.. The chain is Endoglucanase 20 (GLU15) from Oryza sativa subsp. japonica (Rice).